The chain runs to 303 residues: Olfactory receptor 10A2 (303 aa).

The Extracellular segment spans residues 1–12 (MSFSSLPTEIQS). The helical transmembrane segment at 13 to 33 (LLFLTFLTIYLVTLMGNCLII) threads the bilayer. The Cytoplasmic segment spans residues 34–41 (LVTLADPM). Residues 42–62 (LHSPMYFFLRNLSFLEIGFNL) form a helical membrane-spanning segment. The Extracellular portion of the chain corresponds to 63–86 (VIVPKMLGTLLAQDTTISFLGCAT). An intrachain disulfide couples Cys84 to Cys176. A helical transmembrane segment spans residues 87-107 (QMYFFFFFGVAECFLLATMAY). Over 108 to 126 (DRYVAICSPLHYPVIMNQR) the chain is Cytoplasmic. A helical membrane pass occupies residues 127 to 147 (TRAKLAAASWFPGFPVATVQT). The Extracellular segment spans residues 148-184 (TWLFSFPFCGTNKVNHFFCDSPPVLRLVCADTALFEI). Residues 185 to 204 (YAIVGTILVVMIPCLLILCS) form a helical membrane-spanning segment. The Cytoplasmic segment spans residues 205-224 (YTHIAAAILKIPSAKGKNKA). The helical transmembrane segment at 225 to 245 (FSTCSSHLLVVSLFYISLSLT) threads the bilayer. Topologically, residues 246–258 (YFRPKSNNSPEGK) are extracellular. A helical transmembrane segment spans residues 259-279 (KLLSLSYTVMTPMLNPIIYSL). Topologically, residues 280–301 (RNNEVKNALSRTVSKALALRNC) are cytoplasmic.

Belongs to the G-protein coupled receptor 1 family.

It localises to the cell membrane. Odorant receptor. The protein is Olfactory receptor 10A2 (OR10A2) of Homo sapiens (Human).